Consider the following 290-residue polypeptide: MTITGKTKVAGIIGWPVSHSLSPPMHNAAFEALGLDFTYVPFPVAPERLAAGIAGLAALGVVGFSVTIPHKVAILPLLDRVTPEAELIGAVNTVAVEEGALTGYNTDGIGLLSALRSKLGFHPEGRSVLVLGAGGAARSAVASLGLAGAGRVEVANRSPDAGRCLAEAMRERLAGTDFGFQPLGQISDKGYMSSFDLVVNTTSVGMAGDAFAGLDLAALKPGACVYDMVYAPPVTPLLAQAEAAGVPWANGLGMLAAQGEAAFRIWTGAIPPEGCMEKALAARLTTPGNP.

Residues 20–22 (SLS) and Thr-67 each bind shikimate. The active-site Proton acceptor is Lys-71. Residues Asn-92 and Asp-107 each contribute to the shikimate site. NADP(+)-binding positions include 132-136 (GAGGA) and Met-228. Tyr-230 lines the shikimate pocket. Gly-251 contributes to the NADP(+) binding site.

The protein belongs to the shikimate dehydrogenase family. As to quaternary structure, homodimer.

It catalyses the reaction shikimate + NADP(+) = 3-dehydroshikimate + NADPH + H(+). It participates in metabolic intermediate biosynthesis; chorismate biosynthesis; chorismate from D-erythrose 4-phosphate and phosphoenolpyruvate: step 4/7. Its function is as follows. Involved in the biosynthesis of the chorismate, which leads to the biosynthesis of aromatic amino acids. Catalyzes the reversible NADPH linked reduction of 3-dehydroshikimate (DHSA) to yield shikimate (SA). This is Shikimate dehydrogenase (NADP(+)) from Citrifermentans bemidjiense (strain ATCC BAA-1014 / DSM 16622 / JCM 12645 / Bem) (Geobacter bemidjiensis).